Reading from the N-terminus, the 603-residue chain is Variable flagella 3 (603 aa).

Residues 169 to 289 (GGEVSAELRR…TEDLEARDRR (121 aa)) are a coiled coil. The span at 288–297 (RRMNSTDRIR) shows a compositional bias: basic and acidic residues. 2 disordered regions span residues 288–526 (RRMN…PARA) and 539–564 (AGRG…SSKS). The segment covering 337 to 348 (SRSNSRGRGTSS) has biased composition (low complexity). Residues 364–380 (PRFDPTEYVRQRKERES) show a composition bias toward basic and acidic residues. The segment covering 397–406 (AGTSRASSVV) has biased composition (polar residues). Residues 486–510 (GASGGGAGGWSKFPGGGGGGVGGSG) show a composition bias toward gly residues. Over residues 511-520 (QRISSNSPRS) the composition is skewed to polar residues.

Belongs to the CCDC61 family.

It is found in the cytoplasm. The protein resides in the cytoskeleton. The protein localises to the flagellum basal body. In terms of biological role, required for normal flagella and striated fiber formation. In Chlamydomonas reinhardtii (Chlamydomonas smithii), this protein is Variable flagella 3.